The sequence spans 551 residues: Palatinase (551 aa).

The active-site Nucleophile is D201. E243 functions as the Proton donor in the catalytic mechanism.

The protein belongs to the glycosyl hydrolase 13 family.

The enzyme catalyses 6-O-alpha-D-glucopyranosyl-D-fructose + H2O = alpha-D-glucose + D-fructose. Its pathway is glycan degradation; palatinose degradation. Its function is as follows. Catalyzes the hydrolysis of palatinose. Shows a strict specificity toward palatinose, and cannot release glucose from the disaccharides sucrose, maltose, trehalose and melibiose. Involved in the degradation of palatinose, a sucrose isomer that is formed as a reserve material under conditions of excess carbon availability, sequestered in a form unavailable to competitors such as fungi or the host plant, and whose consumption appears to be postponed until the preferentially metabolized carbon source (e.g. sucrose) is depleted. The sequence is that of Palatinase from Erwinia rhapontici (Pectobacterium rhapontici).